The sequence spans 133 residues: DNA-directed RNA polymerase subunit omega (133 aa).

Belongs to the RNA polymerase subunit omega family. In terms of assembly, the RNAP catalytic core consists of 2 alpha, 1 beta, 1 beta' and 1 omega subunit. When a sigma factor is associated with the core the holoenzyme is formed, which can initiate transcription.

The enzyme catalyses RNA(n) + a ribonucleoside 5'-triphosphate = RNA(n+1) + diphosphate. Promotes RNA polymerase assembly. Latches the N- and C-terminal regions of the beta' subunit thereby facilitating its interaction with the beta and alpha subunits. The chain is DNA-directed RNA polymerase subunit omega from Mesorhizobium japonicum (strain LMG 29417 / CECT 9101 / MAFF 303099) (Mesorhizobium loti (strain MAFF 303099)).